The primary structure comprises 429 residues: UPF0597 protein AHA_1619 (429 aa).

Belongs to the UPF0597 family.

This Aeromonas hydrophila subsp. hydrophila (strain ATCC 7966 / DSM 30187 / BCRC 13018 / CCUG 14551 / JCM 1027 / KCTC 2358 / NCIMB 9240 / NCTC 8049) protein is UPF0597 protein AHA_1619.